Reading from the N-terminus, the 160-residue chain is Prostaglandin E synthase 3 (160 aa).

In terms of domain architecture, CS spans 1 to 90 (MQPASAKWYD…ESGQSWPRLT (90 aa)). Lys-33 is subject to N6-acetyllysine. Lys-35 is covalently cross-linked (Glycyl lysine isopeptide (Lys-Gly) (interchain with G-Cter in SUMO2)). Ser-44 carries the post-translational modification Phosphoserine. Lys-65 is covalently cross-linked (Glycyl lysine isopeptide (Lys-Gly) (interchain with G-Cter in SUMO2)). A phosphoserine mark is found at Ser-85, Ser-100, Ser-113, and Ser-118. A disordered region spans residues 118 to 160 (SNFDRFSEMMDHMGGDEDVDLPEVDGADDDSQDSDDEKMPDLE). Basic and acidic residues predominate over residues 122–132 (RFSEMMDHMGG). The span at 133-153 (DEDVDLPEVDGADDDSQDSDD) shows a compositional bias: acidic residues. A phosphoserine mark is found at Ser-148 and Ser-151. The PXLE motif motif lies at 157–160 (PDLE).

The protein belongs to the p23/wos2 family. As to quaternary structure, probably forms a complex composed of chaperones HSP90 and HSP70, co-chaperones STIP1/HOP, CDC37, PPP5C, PTGES3/p23, TSC1 and client protein TSC2. Binds to the progesterone receptor. Interacts with TERT; the interaction, together with HSP90AA1, is required for correct assembly and stabilization of the telomerase holoenzyme complex. Interacts (via PXLE motif) with EGLN1/PHD2, recruiting EGLN1/PHD2 to the HSP90 pathway to facilitate HIF alpha proteins hydroxylation. Interacts with HSP90AA1, FLCN, FNIP1 and FNIP2. Post-translationally, proteolytically cleaved by caspase-7 (CASP7) in response to apoptosis, leading to its inactivation. Expressed in testis, kidney, bladder and ovary.

The protein localises to the cytoplasm. It carries out the reaction prostaglandin H2 = prostaglandin E2. Its pathway is lipid metabolism; prostaglandin biosynthesis. Its function is as follows. Cytosolic prostaglandin synthase that catalyzes the oxidoreduction of prostaglandin endoperoxide H2 (PGH2) to prostaglandin E2 (PGE2). Molecular chaperone that localizes to genomic response elements in a hormone-dependent manner and disrupts receptor-mediated transcriptional activation, by promoting disassembly of transcriptional regulatory complexes. Facilitates HIF alpha proteins hydroxylation via interaction with EGLN1/PHD2, leading to recruit EGLN1/PHD2 to the HSP90 pathway. The sequence is that of Prostaglandin E synthase 3 (Ptges3) from Mus musculus (Mouse).